The following is a 238-amino-acid chain: Sugar fermentation stimulation protein homolog (238 aa).

It belongs to the SfsA family.

In Brucella abortus (strain S19), this protein is Sugar fermentation stimulation protein homolog.